Reading from the N-terminus, the 443-residue chain is Maintenance of mitochondrial morphology protein 1 (443 aa).

Topologically, residues 1-80 are lumenal; it reads MADLETSDLS…PSNTWSFTQG (80 aa). Residues 81 to 101 form a helical membrane-spanning segment; that stretch reads LIVGQLSVVFVIVIFIKFFVF. The Cytoplasmic segment spans residues 102–443; the sequence is AESSPALAKS…NGDKVEDGSN (342 aa). Disordered regions lie at residues 126–146 and 304–358; these read KKDQSSSDDADPDDDSETTAS and LSAH…NDGT. Over residues 131–142 the composition is skewed to acidic residues; it reads SSDDADPDDDSE. The SMP-LTD domain maps to 165-417; that stretch reads SPESLDWFNV…EPRFQVVRLP (253 aa).

This sequence belongs to the MMM1 family. Homodimer. Component of the ER-mitochondria encounter structure (ERMES) or MDM complex, composed of MMM1, MDM10, MDM12 and MDM34. An MMM1 homodimer associates with one molecule of MDM12 on each side in a pairwise head-to-tail manner, and the SMP-LTD domains of MMM1 and MDM12 generate a continuous hydrophobic tunnel for phospholipid trafficking.

Its subcellular location is the endoplasmic reticulum membrane. Functionally, component of the ERMES/MDM complex, which serves as a molecular tether to connect the endoplasmic reticulum (ER) and mitochondria. Components of this complex are involved in the control of mitochondrial shape and protein biogenesis, and function in nonvesicular lipid trafficking between the ER and mitochondria. The MDM12-MMM1 subcomplex functions in the major beta-barrel assembly pathway that is responsible for biogenesis of all outer membrane beta-barrel proteins, and acts in a late step after the SAM complex. The MDM10-MDM12-MMM1 subcomplex further acts in the TOM40-specific pathway after the action of the MDM12-MMM1 complex. Essential for establishing and maintaining the structure of mitochondria and maintenance of mtDNA nucleoids. This chain is Maintenance of mitochondrial morphology protein 1, found in Scheffersomyces stipitis (strain ATCC 58785 / CBS 6054 / NBRC 10063 / NRRL Y-11545) (Yeast).